Here is a 407-residue protein sequence, read N- to C-terminus: Probable tRNA sulfurtransferase (407 aa).

One can recognise a THUMP domain in the interval 61 to 165 (NEITYRLSKI…LDAIYMYEEV (105 aa)). ATP contacts are provided by residues 183–184 (ML), 208–209 (HF), R265, G287, and Q296.

The protein belongs to the ThiI family.

The protein resides in the cytoplasm. It catalyses the reaction [ThiI sulfur-carrier protein]-S-sulfanyl-L-cysteine + a uridine in tRNA + 2 reduced [2Fe-2S]-[ferredoxin] + ATP + H(+) = [ThiI sulfur-carrier protein]-L-cysteine + a 4-thiouridine in tRNA + 2 oxidized [2Fe-2S]-[ferredoxin] + AMP + diphosphate. The catalysed reaction is [ThiS sulfur-carrier protein]-C-terminal Gly-Gly-AMP + S-sulfanyl-L-cysteinyl-[cysteine desulfurase] + AH2 = [ThiS sulfur-carrier protein]-C-terminal-Gly-aminoethanethioate + L-cysteinyl-[cysteine desulfurase] + A + AMP + 2 H(+). The protein operates within cofactor biosynthesis; thiamine diphosphate biosynthesis. In terms of biological role, catalyzes the ATP-dependent transfer of a sulfur to tRNA to produce 4-thiouridine in position 8 of tRNAs, which functions as a near-UV photosensor. Also catalyzes the transfer of sulfur to the sulfur carrier protein ThiS, forming ThiS-thiocarboxylate. This is a step in the synthesis of thiazole, in the thiamine biosynthesis pathway. The sulfur is donated as persulfide by IscS. In Staphylococcus aureus (strain JH1), this protein is Probable tRNA sulfurtransferase.